Reading from the N-terminus, the 622-residue chain is Membrane protein insertase YidC (622 aa).

The helical transmembrane segment at 8-28 (LFLALILSMGIWMGVNYFFFP) threads the bilayer. A compositionally biased stretch (basic and acidic residues) spans 33–61 (KTSETKEVKVDKPSDDKQDQIQKEKKESR). A disordered region spans residues 33 to 70 (KTSETKEVKVDKPSDDKQDQIQKEKKESRTTIPSKGTK). 4 helical membrane passes run 413-433 (FTIP…KLVF), 484-504 (VGGC…YTAF), 532-552 (AIPY…LMVG), and 571-591 (MLMY…PSGV).

This sequence belongs to the OXA1/ALB3/YidC family. Type 1 subfamily. As to quaternary structure, interacts with the Sec translocase complex via SecD. Specifically interacts with transmembrane segments of nascent integral membrane proteins during membrane integration.

It is found in the cell inner membrane. In terms of biological role, required for the insertion and/or proper folding and/or complex formation of integral membrane proteins into the membrane. Involved in integration of membrane proteins that insert both dependently and independently of the Sec translocase complex, as well as at least some lipoproteins. Aids folding of multispanning membrane proteins. The sequence is that of Membrane protein insertase YidC from Leptospira borgpetersenii serovar Hardjo-bovis (strain JB197).